The chain runs to 318 residues: HTH-type transcriptional regulatory protein TyrR (318 aa).

Residues 15–239 (FIVQSEAMKS…LYNTLYRACS (225 aa)) enclose the Sigma-54 factor interaction; truncated domain. Residues 43-50 (GETGSGKD) and 101-110 (ANKGTVLLDG) contribute to the ATP site. A DNA-binding region (H-T-H motif) is located at residues 292–312 (STRKLAQRLGVSHTAIANKLK).

Homodimer. In presence of tyrosine (or high concentrations of phenylalanine or tryptophan) and ATP, it self-associates to form a hexamer.

It is found in the cytoplasm. The DNA binding ability is drastically reduced in the presence of ATP. Tyrosine further reduces the binding affinity of TyrR in the presence of ATP. Functionally, transcriptional regulator of the TyrR regulon, which includes a number of genes coding for proteins involved in the biosynthesis or transport of the three aromatic amino acids, phenylalanine, tyrosine and tryptophan. These three aromatic amino acids act as effectors which bind to the TyrR protein to form an active regulatory protein. Acts by binding specifically to TyrR boxes in the promoter region of the target genes. Can efficiently repress the transcription of the aroF promoter, but lacks the ability to function as a transcriptional activator. The polypeptide is HTH-type transcriptional regulatory protein TyrR (Haemophilus influenzae (strain ATCC 51907 / DSM 11121 / KW20 / Rd)).